The primary structure comprises 115 residues: Large ribosomal subunit protein bL19 (115 aa).

Belongs to the bacterial ribosomal protein bL19 family.

Functionally, this protein is located at the 30S-50S ribosomal subunit interface and may play a role in the structure and function of the aminoacyl-tRNA binding site. In Nitratidesulfovibrio vulgaris (strain ATCC 29579 / DSM 644 / CCUG 34227 / NCIMB 8303 / VKM B-1760 / Hildenborough) (Desulfovibrio vulgaris), this protein is Large ribosomal subunit protein bL19.